The chain runs to 292 residues: Elongation factor Ts (292 aa).

Residues threonine 82–valine 85 are involved in Mg(2+) ion dislocation from EF-Tu.

This sequence belongs to the EF-Ts family.

Its subcellular location is the cytoplasm. Associates with the EF-Tu.GDP complex and induces the exchange of GDP to GTP. It remains bound to the aminoacyl-tRNA.EF-Tu.GTP complex up to the GTP hydrolysis stage on the ribosome. The polypeptide is Elongation factor Ts (Legionella pneumophila subsp. pneumophila (strain Philadelphia 1 / ATCC 33152 / DSM 7513)).